We begin with the raw amino-acid sequence, 430 residues long: Phosphoribosylamine--glycine ligase (430 aa).

Residues 109–316 (KDFMARHGIP…LLDLIEAALN (208 aa)) form the ATP-grasp domain. 135–196 (VRQQGAPIVI…EEYLDGEEAS (62 aa)) contacts ATP. Mg(2+) is bound by residues E286 and N288.

This sequence belongs to the GARS family. Requires Mg(2+) as cofactor. Mn(2+) is required as a cofactor.

The enzyme catalyses 5-phospho-beta-D-ribosylamine + glycine + ATP = N(1)-(5-phospho-beta-D-ribosyl)glycinamide + ADP + phosphate + H(+). It participates in purine metabolism; IMP biosynthesis via de novo pathway; N(1)-(5-phospho-D-ribosyl)glycinamide from 5-phospho-alpha-D-ribose 1-diphosphate: step 2/2. In Xylella fastidiosa (strain Temecula1 / ATCC 700964), this protein is Phosphoribosylamine--glycine ligase.